Reading from the N-terminus, the 260-residue chain is Thrombin-like enzyme bhalternin (260 aa).

An N-terminal signal peptide occupies residues 1–18 (MVLIRVLANLLILQLSYA). The propeptide occupies 19 to 24 (QKASEL). Residues 25–251 (VIGGDECNIN…YSEWIQSIIA (227 aa)) enclose the Peptidase S1 domain. 5 cysteine pairs are disulfide-bonded: cysteine 31–cysteine 165, cysteine 50–cysteine 66, cysteine 144–cysteine 212, cysteine 176–cysteine 191, and cysteine 202–cysteine 227. N-linked (GlcNAc...) asparagine glycosylation occurs at asparagine 44. Residue asparagine 81 is glycosylated (N-linked (GlcNAc...) asparagine).

Belongs to the peptidase S1 family. Snake venom subfamily. As to quaternary structure, monomer. As to expression, expressed by the venom gland.

It localises to the secreted. Inhibited by benzamidine and partially inhibited by EDTA. Thrombin-like snake venom serine protease that induces blood clotting in vitro, defibrinogenation in vivo (by intraperitoneal injection into mice), albuminolytic and fibrinogenolytic activities. Preferentially cleaves the alpha chain of fibrinogen (FGA). Causes hemolysis in the heart, causes apparent hyperemia and lymphocytic interstitial pneumonitis in the lung, causes necrosis and inflammatory infiltrate in the liver, and causes glomerular congestion in the kidney. Also provokes a drastic myonecrosis. The polypeptide is Thrombin-like enzyme bhalternin (Bothrops alternatus (Urutu)).